A 572-amino-acid polypeptide reads, in one-letter code: Arginine--tRNA ligase (572 aa).

Positions 121–131 (PNLAKEMHVGH) match the 'HIGH' region motif.

The protein belongs to the class-I aminoacyl-tRNA synthetase family. Monomer.

The protein resides in the cytoplasm. It carries out the reaction tRNA(Arg) + L-arginine + ATP = L-arginyl-tRNA(Arg) + AMP + diphosphate. This is Arginine--tRNA ligase from Chromobacterium violaceum (strain ATCC 12472 / DSM 30191 / JCM 1249 / CCUG 213 / NBRC 12614 / NCIMB 9131 / NCTC 9757 / MK).